Here is a 129-residue protein sequence, read N- to C-terminus: Phosphoribosyl-AMP cyclohydrolase (129 aa).

Aspartate 76 is a binding site for Mg(2+). Cysteine 77 serves as a coordination point for Zn(2+). Aspartate 78 and aspartate 80 together coordinate Mg(2+). Positions 97 and 104 each coordinate Zn(2+).

It belongs to the PRA-CH family. In terms of assembly, homodimer. Mg(2+) serves as cofactor. The cofactor is Zn(2+).

Its subcellular location is the cytoplasm. The enzyme catalyses 1-(5-phospho-beta-D-ribosyl)-5'-AMP + H2O = 1-(5-phospho-beta-D-ribosyl)-5-[(5-phospho-beta-D-ribosylamino)methylideneamino]imidazole-4-carboxamide. It functions in the pathway amino-acid biosynthesis; L-histidine biosynthesis; L-histidine from 5-phospho-alpha-D-ribose 1-diphosphate: step 3/9. Catalyzes the hydrolysis of the adenine ring of phosphoribosyl-AMP. The protein is Phosphoribosyl-AMP cyclohydrolase of Verminephrobacter eiseniae (strain EF01-2).